The chain runs to 850 residues: Rho guanine nucleotide exchange factor 33 (850 aa).

Basic and acidic residues-rich tracts occupy residues 1–13 and 98–113; these read MEKS…ENEH and EEMQ…EKRR. Disordered stretches follow at residues 1-21 and 98-209; these read MEKS…NPST and EEMQ…DENL. Positions 54-128 form a coiled coil; it reads LEEKVKSCRC…KAKKAQKEEH (75 aa). The segment covering 130-149 has biased composition (low complexity); it reads AQAGPASAPAPGSAPTQGSP. Residues 164–175 show a composition bias toward polar residues; sequence DFTNMLPSQNYE. One can recognise a DH domain in the interval 273–448; the sequence is KRQTVALELL…RVFISHYTLL (176 aa). Disordered regions lie at residues 504-550 and 702-850; these read EMLQ…WELE and AAQA…WGWW. Composition is skewed to low complexity over residues 510–520 and 754–770; these read PSSSSSAPAVS and APHG…GAPR. Arginine 766 bears the Omega-N-methylarginine mark. Positions 773 to 783 are enriched in polar residues; it reads FPQQRSQSEKQ. Basic and acidic residues predominate over residues 784 to 806; sequence TYLEEMHLEDATRFCPKEERESE. Residues 826 to 835 show a composition bias toward basic residues; that stretch reads SFRKLFKKKN.

The protein is Rho guanine nucleotide exchange factor 33 (Arhgef33) of Mus musculus (Mouse).